The chain runs to 412 residues: Proteasome-activating nucleotidase (412 aa).

Residues E15–P73 adopt a coiled-coil conformation. ATP-binding positions include G197 to L202 and H336. Positions M410–A412 are docks into pockets in the proteasome alpha-ring to cause gate opening.

Belongs to the AAA ATPase family. As to quaternary structure, homohexamer. The hexameric complex has a two-ring architecture resembling a top hat that caps the 20S proteasome core at one or both ends. Upon ATP-binding, the C-terminus of PAN interacts with the alpha-rings of the proteasome core by binding to the intersubunit pockets.

The protein resides in the cytoplasm. Functionally, ATPase which is responsible for recognizing, binding, unfolding and translocation of substrate proteins into the archaeal 20S proteasome core particle. Is essential for opening the gate of the 20S proteasome via an interaction with its C-terminus, thereby allowing substrate entry and access to the site of proteolysis. Thus, the C-termini of the proteasomal ATPase function like a 'key in a lock' to induce gate opening and therefore regulate proteolysis. Unfolding activity requires energy from ATP hydrolysis, whereas ATP binding alone promotes ATPase-20S proteasome association which triggers gate opening, and supports translocation of unfolded substrates. This chain is Proteasome-activating nucleotidase, found in Methanoculleus marisnigri (strain ATCC 35101 / DSM 1498 / JR1).